The primary structure comprises 509 residues: Heat shock 70 kDa protein 14-A (509 aa).

The protein belongs to the heat shock protein 70 family. As to quaternary structure, component of ribosome-associated complex (RAC).

The protein localises to the cytoplasm. It is found in the cytosol. Functionally, component of the ribosome-associated complex (RAC), a complex involved in folding or maintaining nascent polypeptides in a folding-competent state. The polypeptide is Heat shock 70 kDa protein 14-A (hspa14-a) (Xenopus laevis (African clawed frog)).